A 184-amino-acid chain; its full sequence is Photosystem I assembly protein Ycf4 (184 aa).

2 helical membrane-spanning segments follow: residues 21–43 (NFCWAFILLFGALGFFFVGFSSY) and 58–80 (LFIPQGIVMCFYGIAGLFISFYL).

It belongs to the Ycf4 family.

It is found in the plastid. The protein resides in the chloroplast thylakoid membrane. Seems to be required for the assembly of the photosystem I complex. The protein is Photosystem I assembly protein Ycf4 of Marchantia polymorpha (Common liverwort).